Consider the following 242-residue polypeptide: Histone-lysine N-methyltransferase set-1 (242 aa).

Residues 1–61 (MKVAAKKLAT…TRSRKGVSVK (61 aa)) are disordered. The span at 30–43 (SENPSSLASHSSSS) shows a compositional bias: low complexity. The region spanning 104–226 (RLLEVYKDVV…QGEELLYDYG (123 aa)) is the SET domain. S-adenosyl-L-methionine contacts are provided by residues 114–116 (KGR), tyrosine 159, and 186–187 (NH).

This sequence belongs to the class V-like SAM-binding methyltransferase superfamily. Histone-lysine methyltransferase family. PR/SET subfamily. In embryos, it is expressed ubiquitously. In late embryos, it is expressed in hypodermal seam cells. In L3 and L4 larvae and thereafter, it is expressed in vulval precursor cells. In adult males, it is also expressed in 6 unidentified posterior cells.

It is found in the nucleus. Its subcellular location is the chromosome. It catalyses the reaction L-lysyl(20)-[histone H4] + S-adenosyl-L-methionine = N(6)-methyl-L-lysyl(20)-[histone H4] + S-adenosyl-L-homocysteine + H(+). Histone methyltransferase that specifically monomethylates 'Lys-20' of histone H4 (H4K20me1). H4K20me1 is enriched on hermaphrodite X chromosomes and during mitosis. Involved in dosage compensation by repression of X-linked gene expression in hermaphrodites. Plays a role in growth and body fat regulation downstream of the TOR complex 2 pathway. This Caenorhabditis elegans protein is Histone-lysine N-methyltransferase set-1 (set-1).